Here is a 144-residue protein sequence, read N- to C-terminus: AP-4 complex subunit sigma-1 (144 aa).

It belongs to the adaptor complexes small subunit family. In terms of assembly, adaptor protein complex 4 (AP-4) is a heterotetramer composed of two large adaptins (epsilon-type subunit AP4E1 and beta-type subunit AP4B1), a medium adaptin (mu-type subunit AP4M1) and a small adaptin (sigma-type AP4S1). Widely expressed.

The protein localises to the golgi apparatus. The protein resides in the trans-Golgi network membrane. Component of the adaptor protein complex 4 (AP-4). Adaptor protein complexes are vesicle coat components involved both in vesicle formation and cargo selection. They control the vesicular transport of proteins in different trafficking pathways. AP-4 forms a non clathrin-associated coat on vesicles departing the trans-Golgi network (TGN) and may be involved in the targeting of proteins from the trans-Golgi network (TGN) to the endosomal-lysosomal system. It is also involved in protein sorting to the basolateral membrane in epithelial cells and the proper asymmetric localization of somatodendritic proteins in neurons. AP-4 is involved in the recognition and binding of tyrosine-based sorting signals found in the cytoplasmic part of cargos, but may also recognize other types of sorting signal. This is AP-4 complex subunit sigma-1 from Homo sapiens (Human).